The chain runs to 332 residues: RNA polymerase principal sigma factor HrdD (332 aa).

A compositionally biased stretch (basic residues) spans 1 to 11; the sequence is MATRAVARRKS. The interval 1–25 is disordered; it reads MATRAVARRKSAAGETSGSATSVRA. The span at 13-22 shows a compositional bias: low complexity; it reads AGETSGSATS. The Polymerase core binding motif lies at 124–137; the sequence is DLIQEGNAGLVRAV. Positions 294–313 form a DNA-binding region, H-T-H motif; sequence LTEVGKEHGLTRERIRQIEK.

Belongs to the sigma-70 factor family. In terms of assembly, interacts transiently with the RNA polymerase catalytic core.

In terms of biological role, sigma factors are initiation factors that promote the attachment of RNA polymerase to specific initiation sites and are then released. The protein is RNA polymerase principal sigma factor HrdD (hrdD) of Streptomyces coelicolor (strain ATCC BAA-471 / A3(2) / M145).